A 320-amino-acid chain; its full sequence is Mitochondrial thiamine pyrophosphate carrier (320 aa).

3 Solcar repeats span residues 13-106 (NTKF…LTEL), 116-202 (REFS…LKHL), and 214-309 (NENL…FCNV). A helical transmembrane segment spans residues 19–39 (AVAGSVSGLVTRALISPFDVI). The residue at position 51 (Ser51) is a Phosphoserine. The next 4 membrane-spanning stretches (helical) occupy residues 87-107 (ILSIGYGAVQFLSFEMLTELV), 122-142 (FVCGGLAACMATLTVHPVDVL), 173-193 (VFYKGLAPTLIAIFPYAGLQF), and 220-240 (LLCGSGAGVISKTLTYPLDLF). The Substrate recognition motif lies at 241 to 246 (KKRLQV). A helical membrane pass occupies residues 293–313 (ALSTGFMFFWYEFFCNVFHCM).

It belongs to the mitochondrial carrier (TC 2.A.29) family.

It localises to the mitochondrion membrane. The enzyme catalyses thiamine phosphate(out) + thiamine diphosphate(in) = thiamine phosphate(in) + thiamine diphosphate(out). Its function is as follows. Mitochondrial transporter mediating uptake of thiamine diphosphate into mitochondria. It is not clear if the antiporter activity is affected by the membrane potential or by the proton electrochemical gradient. This is Mitochondrial thiamine pyrophosphate carrier (SLC25A19) from Pongo abelii (Sumatran orangutan).